Consider the following 360-residue polypeptide: Phospho-N-acetylmuramoyl-pentapeptide-transferase (360 aa).

The next 10 membrane-spanning stretches (helical) occupy residues 24–44 (RAVM…PWTI), 69–89 (GTPT…TLLW), 92–112 (WANP…ALGF), 133–153 (MVWQ…LAAN), 158–178 (ILIV…GFLV), 199–219 (GLAT…AYAS), 239–259 (VVIF…FNAY), 263–283 (VFMG…VAVI), 288–308 (FVLV…MLQV), and 337–357 (QVVV…LSTL).

The protein belongs to the glycosyltransferase 4 family. MraY subfamily. Requires Mg(2+) as cofactor.

It localises to the cell inner membrane. It catalyses the reaction UDP-N-acetyl-alpha-D-muramoyl-L-alanyl-gamma-D-glutamyl-meso-2,6-diaminopimeloyl-D-alanyl-D-alanine + di-trans,octa-cis-undecaprenyl phosphate = di-trans,octa-cis-undecaprenyl diphospho-N-acetyl-alpha-D-muramoyl-L-alanyl-D-glutamyl-meso-2,6-diaminopimeloyl-D-alanyl-D-alanine + UMP. Its pathway is cell wall biogenesis; peptidoglycan biosynthesis. Its function is as follows. Catalyzes the initial step of the lipid cycle reactions in the biosynthesis of the cell wall peptidoglycan: transfers peptidoglycan precursor phospho-MurNAc-pentapeptide from UDP-MurNAc-pentapeptide onto the lipid carrier undecaprenyl phosphate, yielding undecaprenyl-pyrophosphoryl-MurNAc-pentapeptide, known as lipid I. The chain is Phospho-N-acetylmuramoyl-pentapeptide-transferase from Neisseria meningitidis serogroup A / serotype 4A (strain DSM 15465 / Z2491).